A 336-amino-acid polypeptide reads, in one-letter code: tRNA-modifying protein YgfZ (336 aa).

Positions 28 and 191 each coordinate folate.

This sequence belongs to the tRNA-modifying YgfZ family.

The protein resides in the cytoplasm. In terms of biological role, folate-binding protein involved in regulating the level of ATP-DnaA and in the modification of some tRNAs. It is probably a key factor in regulatory networks that act via tRNA modification, such as initiation of chromosomal replication. The polypeptide is tRNA-modifying protein YgfZ (Hamiltonella defensa subsp. Acyrthosiphon pisum (strain 5AT)).